Consider the following 80-residue polypeptide: Kappa-actitoxin-Avd4f (80 aa).

The signal sequence occupies residues 1-19 (MNKALFLCLVVLCAAVVFA). Positions 20–31 (AEDLQKAKHAPF) are excised as a propeptide. 3 cysteine pairs are disulfide-bonded: C41/C76, C43/C69, and C59/C77.

This sequence belongs to the sea anemone type 3 (BDS) potassium channel toxin family. As to expression, moderately expressed in the ectodermal tissue from the distal and proximal tentacles, body wall, and oral disk.

Its subcellular location is the secreted. It is found in the nematocyst. Blocks Kv3 voltage-gated potassium channels. Reduces blood pressure. The chain is Kappa-actitoxin-Avd4f from Anemonia viridis (Snakelocks anemone).